The sequence spans 161 residues: Lipoprotein signal peptidase (161 aa).

A run of 4 helical transmembrane segments spans residues 8-28, 40-60, 67-87, and 91-111; these read LKYF…KYLA, ITSF…SLLS, QMIM…YLII, and ITEK…LGNF. Catalysis depends on residues Asp-122 and Asp-140. Residues 136 to 156 form a helical membrane-spanning segment; that stretch reads FNIADSAITCGVVILIAASLF.

Belongs to the peptidase A8 family.

Its subcellular location is the cell inner membrane. It catalyses the reaction Release of signal peptides from bacterial membrane prolipoproteins. Hydrolyzes -Xaa-Yaa-Zaa-|-(S,diacylglyceryl)Cys-, in which Xaa is hydrophobic (preferably Leu), and Yaa (Ala or Ser) and Zaa (Gly or Ala) have small, neutral side chains.. It functions in the pathway protein modification; lipoprotein biosynthesis (signal peptide cleavage). Functionally, this protein specifically catalyzes the removal of signal peptides from prolipoproteins. The protein is Lipoprotein signal peptidase of Francisella tularensis subsp. novicida (strain U112).